Reading from the N-terminus, the 87-residue chain is U3-theraphotoxin-Hhn1a 13 (87 aa).

The N-terminal stretch at 1–24 (MVNMKASMFLTSAGLVPLFVVCYA) is a signal peptide. Residues 25 to 52 (SESEEKEFPKEMLSSIFAVDNDFKQEER) constitute a propeptide that is removed on maturation. Disulfide bonds link Cys-54–Cys-67, Cys-61–Cys-72, and Cys-66–Cys-79.

This sequence belongs to the neurotoxin 10 (Hwtx-1) family. 51 (Hntx-8) subfamily. Hntx-8 sub-subfamily. As to expression, expressed by the venom gland.

Its subcellular location is the secreted. Functionally, ion channel inhibitor. The protein is U3-theraphotoxin-Hhn1a 13 of Cyriopagopus hainanus (Chinese bird spider).